A 1058-amino-acid polypeptide reads, in one-letter code: MSGSFWKFGQDFGSQSPLAKLLNRAFIKIDDKPTSTEAGKIDSNSTDESLESNSFKSEDEEEEYELPNREEDYKAYKPNLSLLNDLLDDEELYTELMCSNFKLLVYLKYPEVLSKLIDYVRNSTILESNIDRVTSEDRDLVRGEDKDTTEDFENAKADKKNIDGTFEEKERTRSGEEEELENEENDSASEDTRVTLPHELEEHDDTRRARIAAEILSADVWPISSALIENEGLLAKLWSILRLPSPLSIEASTYFMKINERLLDMNMDGIIEFILKKEHIVDDFLAHIDNPPLMDFLLKVISTDKPEISNGVIQLFKKQNLVPKLIHLLDPVFDSCTQSAAGDFLKALVTISGNCPNEITSSIGPNELTRQLVSPNMMKQLMDIMLKGGNSLNNGVGIIIELIRKNNSDYDTIQTNYTTIESHPPTDRDPIYLGYLVKMFSEHMADFNKILTEKKIPLLQTSYGTIEPLGFERFKICELIAELLHCSNMTLLNEPSAYDIVRERDAERERIFNSQNYVDSNDRSELKENEDDNTGDADDEVEDDTNQVESANTSIDGEEVIDKLNSLQIETNKVNQNMNNEEQHSLMPDFNNGDFKDEEDENPFEPQYSDVILDSSDIEKNFRVSPNVGDQLKISLQDTRVIDTMLEMFFHFQWNNFLHNVVYDVVQQIFNGPLKIGYNRFLLDDLLINIRLTDMIINGNNECIEYEKGHDTRLGYMGHLTLIAEEVTKFTAYIEEMNITFENTEVMSSLFESKWIAYTEDVLEDLKEKYNAILGDIAEEGDMLQDEEEDAVYDKGERTMGTVDDYINDIMQMDNVRCQEEEEDEGEGYVSFDEDEPQEYRNGDSVRSKESNSSEGKRDQEQLYYEYVNEDGTKTRLNFNPDSDATEQVPGEVNRDHKIPLKLKRSFTDACKSETIPNNTVNAKEESVFQFSNELSDGWESSPSNSIPKRASPSKNGMNSPMFQHQFELHSPTDEFGGHKDEILSAEGHDYDIDEYDELSDDSDEEYDNCEDEDSLDYADSAAYALCRSKSKDKISWDEEEQARLMGVVKFNSEHYRD.

Lys-20 is covalently cross-linked (Glycyl lysine isopeptide (Lys-Gly) (interchain with G-Cter in ubiquitin)). Disordered regions lie at residues Thr-34–Glu-71, Ser-135–Glu-202, Asn-513–Asp-556, Cys-818–Gln-862, Thr-873–Glu-892, and Glu-934–Asp-992. A compositionally biased stretch (polar residues) spans Asp-42 to Phe-55. Basic and acidic residues-rich tracts occupy residues Ser-135–Lys-146 and Glu-153–Gly-175. Over residues Glu-176 to Ser-189 the composition is skewed to acidic residues. The segment covering Glu-190–Glu-202 has biased composition (basic and acidic residues). Composition is skewed to acidic residues over residues Glu-528–Asn-546 and Glu-820–Pro-837. The segment covering Gln-838–Glu-861 has biased composition (basic and acidic residues). Residues Glu-934–Phe-963 are compositionally biased toward polar residues. The span at Phe-967 to Tyr-991 shows a compositional bias: basic and acidic residues.

The protein belongs to the SAPS family. Post-translationally, hyperphosphorylated in the absence of SIT4.

Functionally, associates with the SIT4 phosphatase in a cell cycle dependent manner. May be directly or indirectly involved in SIT4-dependent functions in budding and in normal G1 cyclin expression. The polypeptide is SIT4-associating protein SAP185 (SAP185) (Saccharomyces cerevisiae (strain ATCC 204508 / S288c) (Baker's yeast)).